Consider the following 653-residue polypeptide: Large subunit GTPase 1 homolog (653 aa).

Positions 1–31 are disordered; the sequence is MGRRRAPAGGSLGRALMRHQTQRSRSHRHTD. The span at 16–28 shows a compositional bias: basic residues; it reads LMRHQTQRSRSHR. Phosphoserine occurs at positions 93 and 97. Residues 164–445 form the CP-type G domain; that stretch reads WRQLWRVIER…LCDCPGLVMP (282 aa). 212–215 contacts GTP; it reads NKAD. The disordered stretch occupies residues 251–358; it reads DSEEEANKDD…RKTPQKRQLH (108 aa). Serine 252 carries the post-translational modification Phosphoserine. Residues 258–288 are compositionally biased toward basic and acidic residues; it reads KDDRQSNTAEFEHSSFDEAEISHSETEHLPA. Residues 299 to 333 are compositionally biased toward acidic residues; that stretch reads TTDEDDSEYEDCPEEEEDDWQTCSEEDGPEEEDCG. GTP contacts are provided by residues 394-401 and 438-441; these read GYPNVGKS and DCPG. The segment at 630 to 653 is disordered; that stretch reads SENGAGKPWKKHGNRNKKEKSCRL. Positions 637 to 647 are enriched in basic residues; the sequence is PWKKHGNRNKK.

The protein belongs to the TRAFAC class YlqF/YawG GTPase family. LSG1 subfamily.

It localises to the cytoplasm. The protein resides in the endoplasmic reticulum. The protein localises to the nucleus. It is found in the cajal body. The catalysed reaction is GTP + H2O = GDP + phosphate + H(+). Functionally, functions as a GTPase. May act by mediating the release of NMD3 from the 60S ribosomal subunit after export into the cytoplasm during the 60S ribosomal subunit maturation. This Macaca fascicularis (Crab-eating macaque) protein is Large subunit GTPase 1 homolog.